The sequence spans 489 residues: CBL-interacting serine/threonine-protein kinase 12 (489 aa).

One can recognise a Protein kinase domain in the interval 26 to 280 (YEMGKLLGHG…FPEIMENSWF (255 aa)). Residues 32-40 (LGHGTFAKV) and Lys-55 contribute to the ATP site. The active-site Proton acceptor is Asp-148. The segment at 166–195 (DFGLSAVSDQIRQDGLFHTFCGTPAYVAPE) is activation loop. Ser-170 is modified (phosphoserine). Phosphothreonine is present on Thr-184. The NAF domain maps to 336-360 (PRPASLNAFDIISFSQGFDLSGLFD). The interval 363–392 (GEGSRFVSGAPVSKIISKLEEIAKVVSFTV) is PPI.

Belongs to the protein kinase superfamily. CAMK Ser/Thr protein kinase family. SNF1 subfamily. Interacts with CBL2 and CBL3. The cofactor is Mn(2+). In terms of tissue distribution, expressed in roots and shoots.

The catalysed reaction is L-seryl-[protein] + ATP = O-phospho-L-seryl-[protein] + ADP + H(+). It catalyses the reaction L-threonyl-[protein] + ATP = O-phospho-L-threonyl-[protein] + ADP + H(+). CIPK serine-threonine protein kinases interact with CBL proteins. Binding of a CBL protein to the regulatory NAF domain of CIPK protein lead to the activation of the kinase in a calcium-dependent manner. The protein is CBL-interacting serine/threonine-protein kinase 12 (CIPK12) of Arabidopsis thaliana (Mouse-ear cress).